The sequence spans 122 residues: Serum amyloid A-3 protein (122 aa).

A signal peptide spans 1-18 (MKPSIAIILCILILGVDS). Residues 87-122 (TGHGAEDSRADQFANEWGRSGKDPNHFRPAGLPKRY) form a disordered region.

Belongs to the SAA family. In terms of tissue distribution, found in various tissues.

Its subcellular location is the secreted. Functionally, major acute phase reactant. Apolipoprotein of the HDL complex. In vitro exhibits antimicrobial activity against Escherichia coli, Streptococcus uberis and Pseudomonas aeruginosa. The sequence is that of Serum amyloid A-3 protein (Saa3) from Mus musculus (Mouse).